The chain runs to 319 residues: Taste receptor type 2 member 30 (319 aa).

Met-1 is a topological domain (extracellular). A helical membrane pass occupies residues 2 to 22 (ITFLPIIFSILIVVIFVIGNF). Over 23 to 46 (ANGFIALVNSIEWVKRQKISFADQ) the chain is Cytoplasmic. The helical transmembrane segment at 47–67 (ILIALAVSRVGLLWALLLHWY) threads the bilayer. Residues 68–86 (ATELNLAFYSVEVRITAYN) are Extracellular-facing. A helical transmembrane segment spans residues 87–107 (VWAVTNHFSNWLATSLSMFYL). The Cytoplasmic portion of the chain corresponds to 108–126 (LKIANFSNLIFLRIKRRVK). Residues 127–147 (SVILVILLGPLLFLVCHLFVI) traverse the membrane as a helical segment. Residues 148–178 (NMNEIVWTKEYEGNLTWKIKLRNAVFLSNMT) lie on the Extracellular side of the membrane. Residues Asn-161 and Asn-176 are each glycosylated (N-linked (GlcNAc...) asparagine). The chain crosses the membrane as a helical span at residues 179 to 199 (LTMLANFVPLTLTLISFLLLI). Over 200–229 (CSLCKHLKKMQLHGKGSQDPSTKVHIKALQ) the chain is Cytoplasmic. The helical transmembrane segment at 230-250 (TVTCFLLLCAIYFLSMIISVY) threads the bilayer. Residues 251–259 (NFGRLEKKP) are Extracellular-facing. Residues 260-280 (VFMFCQAITFSYPSTHAFILI) traverse the membrane as a helical segment. Residues 281–319 (WGNKKLKQIFLSVLWHVRYWVKDRSLRLHRFTRAALCKG) are Cytoplasmic-facing.

This sequence belongs to the G-protein coupled receptor T2R family.

It is found in the membrane. Its function is as follows. Receptor that may play a role in the perception of bitterness and is gustducin-linked. May play a role in sensing the chemical composition of the gastrointestinal content. The activity of this receptor may stimulate alpha gustducin, mediate PLC-beta-2 activation and lead to the gating of TRPM5. This is Taste receptor type 2 member 30 (TAS2R30) from Pongo pygmaeus (Bornean orangutan).